The following is an 869-amino-acid chain: Serendipity locus protein H-1 (869 aa).

Residues Met-1 to Ser-17 show a composition bias toward basic and acidic residues. Disordered stretches follow at residues Met-1–Pro-32 and Phe-134–Lys-165. Residues Ala-146–Val-164 are compositionally biased toward polar residues. 8 consecutive C2H2-type zinc fingers follow at residues His-269 to His-293, Tyr-299 to His-321, Lys-331 to His-352, Tyr-358 to His-380, Tyr-386 to His-408, Tyr-414 to His-436, Phe-442 to His-464, and Phe-470 to His-493. Disordered stretches follow at residues Thr-554–Gln-573 and Pro-617–Glu-652. Low complexity predominate over residues Ala-630 to Gln-648.

In terms of tissue distribution, distribution varies between nurse cells and the oocyte during oogenesis. Weakly expressed in follicle and border cells.

It localises to the nucleus. May belong to a complex set of multifingered proteins which play an important role in gene activation or regulation at early embryonic stages through a maximal accumulation of their transcripts (or protein product) in the mature oocyte. The sequence is that of Serendipity locus protein H-1 (wdn) from Drosophila melanogaster (Fruit fly).